The following is a 318-amino-acid chain: Pantothenate kinase (318 aa).

Gly-96–Ser-103 lines the ATP pocket.

The protein belongs to the prokaryotic pantothenate kinase family.

It is found in the cytoplasm. It carries out the reaction (R)-pantothenate + ATP = (R)-4'-phosphopantothenate + ADP + H(+). Its pathway is cofactor biosynthesis; coenzyme A biosynthesis; CoA from (R)-pantothenate: step 1/5. This chain is Pantothenate kinase, found in Bradyrhizobium sp. (strain ORS 278).